The chain runs to 234 residues: Large ribosomal subunit protein uL1 (234 aa).

Belongs to the universal ribosomal protein uL1 family. In terms of assembly, part of the 50S ribosomal subunit.

Binds directly to 23S rRNA. The L1 stalk is quite mobile in the ribosome, and is involved in E site tRNA release. Its function is as follows. Protein L1 is also a translational repressor protein, it controls the translation of the L11 operon by binding to its mRNA. This is Large ribosomal subunit protein uL1 from Pectobacterium atrosepticum (strain SCRI 1043 / ATCC BAA-672) (Erwinia carotovora subsp. atroseptica).